A 229-amino-acid polypeptide reads, in one-letter code: Potassium/proton antiporter CemA (229 aa).

3 helical membrane passes run 7–27, 107–127, and 189–209; these read FTPLFYLASIVFLPWWISFSV, ILHFSTNIICFIILSGYSILG, and IISGLVSTFPVILDTIFKYWI.

It belongs to the CemA family.

The protein resides in the plastid. Its subcellular location is the chloroplast inner membrane. It catalyses the reaction K(+)(in) + H(+)(out) = K(+)(out) + H(+)(in). Its function is as follows. Contributes to K(+)/H(+) antiport activity by supporting proton efflux to control proton extrusion and homeostasis in chloroplasts in a light-dependent manner to modulate photosynthesis. Prevents excessive induction of non-photochemical quenching (NPQ) under continuous-light conditions. Indirectly promotes efficient inorganic carbon uptake into chloroplasts. This chain is Potassium/proton antiporter CemA, found in Atropa belladonna (Belladonna).